A 111-amino-acid polypeptide reads, in one-letter code: Cytochrome c (111 aa).

Ala1 carries the N-acetylalanine modification. 3 residues coordinate heme c: Cys22, Cys25, and His26. Lys80 bears the N6,N6,N6-trimethyllysine mark. Residue Met88 coordinates heme c. Lys94 carries the N6,N6,N6-trimethyllysine modification.

The protein belongs to the cytochrome c family. Post-translationally, binds 1 heme c group covalently per subunit.

Its subcellular location is the mitochondrion intermembrane space. In terms of biological role, electron carrier protein. The oxidized form of the cytochrome c heme group can accept an electron from the heme group of the cytochrome c1 subunit of cytochrome reductase. Cytochrome c then transfers this electron to the cytochrome oxidase complex, the final protein carrier in the mitochondrial electron-transport chain. The protein is Cytochrome c of Cucurbita maxima (Pumpkin).